A 452-amino-acid chain; its full sequence is Na(+)/H(+) antiporter NhaA (452 aa).

11 helical membrane-spanning segments follow: residues 27 to 47 (FSGI…NSAL), 67 to 87 (FIGM…FFLM), 108 to 128 (AFPA…YTLF), 137 to 157 (GFGI…LLLG), 166 to 186 (VFLV…IAIF), 194 to 214 (LWLL…KMGV), 216 to 236 (SLFP…NCGI), 314 to 334 (PWSA…VAIS), 343 to 363 (GVLP…ILGL), 381 to 401 (WIDI…SIFI), and 414 to 434 (VAKI…YFFI).

This sequence belongs to the NhaA Na(+)/H(+) (TC 2.A.33) antiporter family.

It is found in the cell inner membrane. The catalysed reaction is Na(+)(in) + 2 H(+)(out) = Na(+)(out) + 2 H(+)(in). Functionally, na(+)/H(+) antiporter that extrudes sodium in exchange for external protons. This is Na(+)/H(+) antiporter NhaA from Wolinella succinogenes (strain ATCC 29543 / DSM 1740 / CCUG 13145 / JCM 31913 / LMG 7466 / NCTC 11488 / FDC 602W) (Vibrio succinogenes).